The following is a 147-amino-acid chain: Protein-export protein SecB (147 aa).

It belongs to the SecB family. In terms of assembly, homotetramer, a dimer of dimers. One homotetramer interacts with 1 SecA dimer.

The protein localises to the cytoplasm. One of the proteins required for the normal export of preproteins out of the cell cytoplasm. It is a molecular chaperone that binds to a subset of precursor proteins, maintaining them in a translocation-competent state. It also specifically binds to its receptor SecA. In Neisseria gonorrhoeae (strain ATCC 700825 / FA 1090), this protein is Protein-export protein SecB.